The primary structure comprises 289 residues: 4-diphosphocytidyl-2-C-methyl-D-erythritol kinase (289 aa).

K10 is a catalytic residue. 94–104 (PVAAGLAGGSS) serves as a coordination point for ATP. D136 is a catalytic residue.

This sequence belongs to the GHMP kinase family. IspE subfamily.

It carries out the reaction 4-CDP-2-C-methyl-D-erythritol + ATP = 4-CDP-2-C-methyl-D-erythritol 2-phosphate + ADP + H(+). The protein operates within isoprenoid biosynthesis; isopentenyl diphosphate biosynthesis via DXP pathway; isopentenyl diphosphate from 1-deoxy-D-xylulose 5-phosphate: step 3/6. Its function is as follows. Catalyzes the phosphorylation of the position 2 hydroxy group of 4-diphosphocytidyl-2C-methyl-D-erythritol. This Bacillus cereus (strain G9842) protein is 4-diphosphocytidyl-2-C-methyl-D-erythritol kinase.